We begin with the raw amino-acid sequence, 172 residues long: Endoribonuclease YbeY (172 aa).

3 residues coordinate Zn(2+): H124, H128, and H134.

It belongs to the endoribonuclease YbeY family. Zn(2+) serves as cofactor.

It is found in the cytoplasm. Its function is as follows. Single strand-specific metallo-endoribonuclease involved in late-stage 70S ribosome quality control and in maturation of the 3' terminus of the 16S rRNA. This Rhodopseudomonas palustris (strain BisA53) protein is Endoribonuclease YbeY.